Consider the following 236-residue polypeptide: DNA repair and recombination protein RadB (236 aa).

This sequence belongs to the eukaryotic RecA-like protein family. RadB subfamily.

Functionally, involved in DNA repair and in homologous recombination. May regulate the cleavage reactions of the branch-structured DNA. Has a very weak ATPase activity that is not stimulated by DNA. Binds DNA but does not promote DNA strands exchange. The protein is DNA repair and recombination protein RadB of Halobacterium salinarum (strain ATCC 29341 / DSM 671 / R1).